A 141-amino-acid chain; its full sequence is Nucleoside diphosphate kinase (141 aa).

K11, F59, R87, T93, R104, and N114 together coordinate ATP. The active-site Pros-phosphohistidine intermediate is H117.

This sequence belongs to the NDK family. As to quaternary structure, homotetramer. Requires Mg(2+) as cofactor.

It is found in the cytoplasm. The catalysed reaction is a 2'-deoxyribonucleoside 5'-diphosphate + ATP = a 2'-deoxyribonucleoside 5'-triphosphate + ADP. It carries out the reaction a ribonucleoside 5'-diphosphate + ATP = a ribonucleoside 5'-triphosphate + ADP. Major role in the synthesis of nucleoside triphosphates other than ATP. The ATP gamma phosphate is transferred to the NDP beta phosphate via a ping-pong mechanism, using a phosphorylated active-site intermediate. The protein is Nucleoside diphosphate kinase of Haemophilus influenzae (strain 86-028NP).